The primary structure comprises 113 residues: UPF0102 protein SUN_0231 (113 aa).

It belongs to the UPF0102 family.

This chain is UPF0102 protein SUN_0231, found in Sulfurovum sp. (strain NBC37-1).